The primary structure comprises 284 residues: MPELPEVETVRRGLELVTLKQPIVDVEVLLARSIALPKEPQAFIEHLRDRRIEQWQRRGKYLLATLDDGSRLVIHLRMSGQLLWLTTPQPPCPHTRVRWFFPTRAELRFVDQRTFGRCWWLPPDCRVAEAIPALATLAPEPLSEAFTVAFLAARLAHCRRSIKTALLDQSIVAGMGNIYADESLFLSGLHPTQSAHTLTPEQVQRLHGVICQVLREGIAAGGTTIRTFMSPAGVNGHYGGQAWVYGRKGEACRVCGTTIERLRLAGRSSHYCPQCQPLSSAIGK.

Pro2 (schiff-base intermediate with DNA) is an active-site residue. The active-site Proton donor is the Glu3. The active-site Proton donor; for beta-elimination activity is the Lys60. The DNA site is built by His94 and Arg113. The FPG-type zinc-finger motif lies at 243 to 277; sequence WVYGRKGEACRVCGTTIERLRLAGRSSHYCPQCQP. The active-site Proton donor; for delta-elimination activity is the Arg267.

It belongs to the FPG family. Monomer. Zn(2+) is required as a cofactor.

It carries out the reaction Hydrolysis of DNA containing ring-opened 7-methylguanine residues, releasing 2,6-diamino-4-hydroxy-5-(N-methyl)formamidopyrimidine.. The catalysed reaction is 2'-deoxyribonucleotide-(2'-deoxyribose 5'-phosphate)-2'-deoxyribonucleotide-DNA = a 3'-end 2'-deoxyribonucleotide-(2,3-dehydro-2,3-deoxyribose 5'-phosphate)-DNA + a 5'-end 5'-phospho-2'-deoxyribonucleoside-DNA + H(+). In terms of biological role, involved in base excision repair of DNA damaged by oxidation or by mutagenic agents. Acts as a DNA glycosylase that recognizes and removes damaged bases. Has a preference for oxidized purines, such as 7,8-dihydro-8-oxoguanine (8-oxoG). Has AP (apurinic/apyrimidinic) lyase activity and introduces nicks in the DNA strand. Cleaves the DNA backbone by beta-delta elimination to generate a single-strand break at the site of the removed base with both 3'- and 5'-phosphates. This chain is Formamidopyrimidine-DNA glycosylase (mutM), found in Synechococcus elongatus.